Consider the following 307-residue polypeptide: Probable inactive peptidyl-prolyl cis-trans isomerase-like 6 (307 aa).

Residues F141–Q304 enclose the PPIase cyclophilin-type domain.

It belongs to the cyclophilin-type PPIase family.

Probable inactive PPIase with no peptidyl-prolyl cis-trans isomerase activity. This Bos taurus (Bovine) protein is Probable inactive peptidyl-prolyl cis-trans isomerase-like 6.